A 316-amino-acid polypeptide reads, in one-letter code: Transaldolase (316 aa).

K131 acts as the Schiff-base intermediate with substrate in catalysis.

This sequence belongs to the transaldolase family. Type 1 subfamily. In terms of assembly, homodimer.

Its subcellular location is the cytoplasm. It catalyses the reaction D-sedoheptulose 7-phosphate + D-glyceraldehyde 3-phosphate = D-erythrose 4-phosphate + beta-D-fructose 6-phosphate. It functions in the pathway carbohydrate degradation; pentose phosphate pathway; D-glyceraldehyde 3-phosphate and beta-D-fructose 6-phosphate from D-ribose 5-phosphate and D-xylulose 5-phosphate (non-oxidative stage): step 2/3. Transaldolase is important for the balance of metabolites in the pentose-phosphate pathway. The polypeptide is Transaldolase (Glaesserella parasuis serovar 5 (strain SH0165) (Haemophilus parasuis)).